The following is an 875-amino-acid chain: Protein HIR2 (875 aa).

6 WD repeats span residues 10-47 (IHNEQVNALAALGPYIILAGSGGHVMAWRQQQLVDTAF), 118-158 (KSPS…KLSE), 163-201 (KASKPITGIIDPTGQTFTVMTSDRSILVYQINKTGTHKL), 237-277 (PNNA…PAFY), 278-316 (EKPNLKKGTSTRYNLIATSGSTDGTILVWNTKRMKPLFN), and 320-359 (VSSTAINDMSWSQDGFTLFAISNDATLYTFAFQEKDLGVA). The segment at 398–473 (ESASAAPIPN…IAPGSKKQKK (76 aa)) is disordered. Residues 424-446 (ANNQTNGIKTIQSTSMEFNTPSY) are compositionally biased toward polar residues. 2 WD repeats span residues 546–587 (LFQD…LMAP) and 589–626 (VLGVSISFLEACGTYLLCLTSIGELYCWNIEQKKLAFP). The residue at position 713 (Ser713) is a Phosphoserine.

This sequence belongs to the WD repeat HIR1 family. As to quaternary structure, component of the HIR complex, composed of HIR1, HIR2, HIR3 and HPC2. This complex may consist of one copy of HIR1 and HIR3 and two copies of HIR2 and HPC2. The HIR complex interacts with ASF1. Interacts with SNF2. Interacts with SNF5. Interacts with SWI3. Interacts with RTT106.

The protein localises to the nucleus. It is found in the chromosome. Its function is as follows. Component of the HIR complex, which cooperates with ASF1 to promote replication-independent chromatin assembly. The HIR complex is also required for the periodic repression of three of the four histone gene loci during the cell cycle as well as for autogenous regulation of the HTA1-HTB1 locus by H2A and H2B. DNA-binding by the HIR complex may repress transcription by inhibiting nucleosome remodeling by the SWI/SNF complex. The HIR complex may also be required for transcriptional silencing of centromeric, telomeric and mating-type loci in the absence of CAF-1. In Saccharomyces cerevisiae (strain ATCC 204508 / S288c) (Baker's yeast), this protein is Protein HIR2 (HIR2).